Reading from the N-terminus, the 551-residue chain is ETS domain-containing transcription factor ERF (551 aa).

2 positions are modified to phosphothreonine: T3 and T7. 2 positions are modified to phosphoserine: S20 and S24. A DNA-binding region (ETS) is located at residues 27 to 107; sequence IQLWHFILEL…KGKRFTYKFN (81 aa). 2 disordered regions span residues 130–169 and 184–304; these read QSAPPVPSGGSHFRFPPSTPSEVLSPTEDPRSPPACSSSS and GSVS…SHFS. S185 and S190 each carry phosphoserine. The segment covering 239 to 250 has biased composition (pro residues); that stretch reads RGGPEPLSPFPV. A compositionally biased stretch (low complexity) spans 251–268; it reads SPLAGPGSLLPPQLSPAL. Positions 289–301 are enriched in gly residues; that stretch reads SGGGGPSGSGGGS. A Phosphoserine modification is found at S327. A disordered region spans residues 342 to 476; sequence PQRPDKCPLP…KPEPGEAPGV (135 aa). Residues 348–361 are compositionally biased toward pro residues; sequence CPLPPMAPETPPVP. Low complexity predominate over residues 362 to 373; the sequence is SSASSSSSSSSS. A compositionally biased stretch (gly residues) spans 404–413; the sequence is GGSGSGGLAE. Phosphoserine is present on residues S433 and S437. Residues 433–453 are compositionally biased toward acidic residues; the sequence is SEGESEEVEVTDISDEDEEDG. T443 bears the Phosphothreonine mark. S446 carries the post-translational modification Phosphoserine. Residues K467, K483, and K514 each participate in a glycyl lysine isopeptide (Lys-Gly) (interchain with G-Cter in SUMO2) cross-link. Residues 495 to 551 form a disordered region; the sequence is RLEGGGCLSGGPEDEGEDKKVRGDVGPGESGGPLTPRRVSSDLQHATAQLSLEHRDS. Phosphothreonine; by MAPK1 is present on T529. 3 positions are modified to phosphoserine: S534, S535, and S551. Residues 535–544 are compositionally biased toward polar residues; it reads SDLQHATAQL.

It belongs to the ETS family. Phosphorylated by multiple kinases including MAPK1/ERK2 at THR-529. Phosphorylation regulates the activity of ERF. Expressed along the osteogenic margins of the developing calvarial bones, in a similar distribution to that observed for the master osteogenic regulator RUNX2.

Its subcellular location is the nucleus. Potent transcriptional repressor that binds to the H1 element of the Ets2 promoter. May regulate other genes involved in cellular proliferation. Required for extraembryonic ectoderm differentiation, ectoplacental cone cavity closure, and chorioallantoic attachment. May be important for regulating trophoblast stem cell differentiation. The chain is ETS domain-containing transcription factor ERF (Erf) from Mus musculus (Mouse).